The following is a 545-amino-acid chain: Chaperonin GroEL (545 aa).

ATP-binding positions include 30-33 (TLGP), Lys51, 87-91 (DGTTT), Gly415, 479-481 (NAA), and Asp495. The disordered stretch occupies residues 526 to 545 (KEDKPDLGGAGGMGGMGGMM). The span at 533–545 (GGAGGMGGMGGMM) shows a compositional bias: gly residues.

Belongs to the chaperonin (HSP60) family. Forms a cylinder of 14 subunits composed of two heptameric rings stacked back-to-back. Interacts with the co-chaperonin GroES.

Its subcellular location is the cytoplasm. It carries out the reaction ATP + H2O + a folded polypeptide = ADP + phosphate + an unfolded polypeptide.. Together with its co-chaperonin GroES, plays an essential role in assisting protein folding. The GroEL-GroES system forms a nano-cage that allows encapsulation of the non-native substrate proteins and provides a physical environment optimized to promote and accelerate protein folding. The sequence is that of Chaperonin GroEL from Sodalis glossinidius.